The following is a 325-amino-acid chain: Replication factor C small subunit (325 aa).

Gly54 to Thr61 serves as a coordination point for ATP.

Belongs to the activator 1 small subunits family. RfcS subfamily. In terms of assembly, heteromultimer composed of small subunits (RfcS) and large subunits (RfcL).

Part of the RFC clamp loader complex which loads the PCNA sliding clamp onto DNA. This Haloarcula marismortui (strain ATCC 43049 / DSM 3752 / JCM 8966 / VKM B-1809) (Halobacterium marismortui) protein is Replication factor C small subunit.